The sequence spans 275 residues: Dermonecrotic toxin SpeSicTox-betaIIA1 (275 aa).

The active site involves His5. 2 residues coordinate Mg(2+): Glu25 and Asp27. His41 acts as the Nucleophile in catalysis. 2 disulfide bridges follow: Cys45–Cys51 and Cys47–Cys190. Mg(2+) is bound at residue Asp85.

This sequence belongs to the arthropod phospholipase D family. Class II subfamily. Mg(2+) serves as cofactor. In terms of tissue distribution, expressed by the venom gland.

The protein resides in the secreted. The catalysed reaction is an N-(acyl)-sphingosylphosphocholine = an N-(acyl)-sphingosyl-1,3-cyclic phosphate + choline. It catalyses the reaction an N-(acyl)-sphingosylphosphoethanolamine = an N-(acyl)-sphingosyl-1,3-cyclic phosphate + ethanolamine. It carries out the reaction a 1-acyl-sn-glycero-3-phosphocholine = a 1-acyl-sn-glycero-2,3-cyclic phosphate + choline. The enzyme catalyses a 1-acyl-sn-glycero-3-phosphoethanolamine = a 1-acyl-sn-glycero-2,3-cyclic phosphate + ethanolamine. Its function is as follows. Dermonecrotic toxins cleave the phosphodiester linkage between the phosphate and headgroup of certain phospholipids (sphingolipid and lysolipid substrates), forming an alcohol (often choline) and a cyclic phosphate. This toxin acts on sphingomyelin (SM). It may also act on ceramide phosphoethanolamine (CPE), lysophosphatidylcholine (LPC) and lysophosphatidylethanolamine (LPE), but not on lysophosphatidylserine (LPS), and lysophosphatidylglycerol (LPG). It acts by transphosphatidylation, releasing exclusively cyclic phosphate products as second products. Induces dermonecrosis, hemolysis, increased vascular permeability, edema, inflammatory response, and platelet aggregation. The protein is Dermonecrotic toxin SpeSicTox-betaIIA1 of Sicarius peruensis (Six-eyed sand spider).